Reading from the N-terminus, the 304-residue chain is Signal recognition particle receptor FtsY (304 aa).

GTP contacts are provided by residues 109–116 (GVNGVGKT), 191–195 (DTAGR), and 255–258 (TKLD).

It belongs to the GTP-binding SRP family. FtsY subfamily. As to quaternary structure, part of the signal recognition particle protein translocation system, which is composed of SRP and FtsY. In terms of processing, sensitive to endogenous proteolytic cleavage between residues 18 and 19 and between residues 86 and 87.

The protein localises to the cell membrane. The protein resides in the cytoplasm. The catalysed reaction is GTP + H2O = GDP + phosphate + H(+). Its function is as follows. Involved in targeting and insertion of nascent membrane proteins into the cytoplasmic membrane. Acts as a receptor for the complex formed by the signal recognition particle (SRP) and the ribosome-nascent chain (RNC). The polypeptide is Signal recognition particle receptor FtsY (Thermus aquaticus).